The primary structure comprises 253 residues: Probable transcriptional regulatory protein SynRCC307_1833 (253 aa).

Belongs to the TACO1 family.

The protein localises to the cytoplasm. In Synechococcus sp. (strain RCC307), this protein is Probable transcriptional regulatory protein SynRCC307_1833.